Here is a 457-residue protein sequence, read N- to C-terminus: CUB1 family protein C30C2.08 (457 aa).

Coiled-coil stretches lie at residues 119–174 (TQND…NISK) and 418–448 (QELV…EERE).

The protein belongs to the CUB1 family.

It localises to the cytoplasm. Its subcellular location is the nucleus. Its function is as follows. Involved in bleomycin tolerance with links to DNA repair and/or proteasome function. This is CUB1 family protein C30C2.08 from Schizosaccharomyces pombe (strain 972 / ATCC 24843) (Fission yeast).